A 403-amino-acid polypeptide reads, in one-letter code: Na(+)/H(+) antiporter NhaA (403 aa).

The next 11 membrane-spanning stretches (helical) occupy residues 23–43, 66–86, 101–121, 132–152, 161–181, 184–204, 219–239, 257–277, 297–317, 333–353, and 363–383; these read AFFL…PWAA, VAAW…ILEI, VALP…TYLL, GWAI…LALG, AWLM…IALF, GSMY…LIGA, GILL…AGVI, WVSS…FGFM, LGIM…ATLL, GMLF…LFVA, and IAPA…TGWF.

This sequence belongs to the NhaA Na(+)/H(+) (TC 2.A.33) antiporter family.

The protein localises to the cell inner membrane. It carries out the reaction Na(+)(in) + 2 H(+)(out) = Na(+)(out) + 2 H(+)(in). In terms of biological role, na(+)/H(+) antiporter that extrudes sodium in exchange for external protons. The sequence is that of Na(+)/H(+) antiporter NhaA from Gluconobacter oxydans (strain 621H) (Gluconobacter suboxydans).